We begin with the raw amino-acid sequence, 159 residues long: Peptide methionine sulfoxide reductase MsrB (159 aa).

Positions 22-144 (RERLEANLTA…NSVSLQFVKA (123 aa)) constitute a MsrB domain. Zn(2+)-binding residues include C61, C64, C110, and C113. C133 serves as the catalytic Nucleophile.

The protein belongs to the MsrB Met sulfoxide reductase family. Zn(2+) is required as a cofactor.

The catalysed reaction is L-methionyl-[protein] + [thioredoxin]-disulfide + H2O = L-methionyl-(R)-S-oxide-[protein] + [thioredoxin]-dithiol. In Caulobacter vibrioides (strain ATCC 19089 / CIP 103742 / CB 15) (Caulobacter crescentus), this protein is Peptide methionine sulfoxide reductase MsrB.